The following is a 110-amino-acid chain: Iron-sulfur cluster assembly protein CyaY (110 aa).

It belongs to the frataxin family.

Its function is as follows. Involved in iron-sulfur (Fe-S) cluster assembly. May act as a regulator of Fe-S biogenesis. The sequence is that of Iron-sulfur cluster assembly protein CyaY from Pseudomonas syringae pv. tomato (strain ATCC BAA-871 / DC3000).